A 795-amino-acid polypeptide reads, in one-letter code: Forkhead box protein P4 (795 aa).

Residues 1–25 are compositionally biased toward polar residues; the sequence is MMVESASETIRSAPSGQNGVGSLSA. The interval 1-62 is disordered; sequence MMVESASETI…SGGADSNGEM (62 aa). Over residues 36-45 the composition is skewed to low complexity; that stretch reads AGTAPAAGRD. 2 positions are modified to phosphoserine: Ser58 and Ser92. A Glycyl lysine isopeptide (Lys-Gly) (interchain with G-Cter in SUMO2) cross-link involves residue Lys181. 2 disordered regions span residues 233–252 and 265–310; these read PQLWKGEGAPGQPAEDSGRQ and TSFA…PLYG. Residues 292 to 303 show a composition bias toward basic and acidic residues; sequence SRRDSSSHEETP. The C2H2-type zinc finger occupies 312-337; sequence GECKWPGCETLCEDLGQFIKHLNTEH. The segment at 354-375 is leucine-zipper; it reads VQQLEIQLAKESERLQAMMAHL. Positions 379 to 437 are disordered; sequence PSEPKPFSQPVTVSADPFPDGLVHPPTSAAAPVTPLRPPGLGSASLHSGGPARRRSNDK. Residue Lys383 forms a Glycyl lysine isopeptide (Lys-Gly) (interchain with G-Cter in SUMO2) linkage. Residues 459–549 constitute a DNA-binding region (fork-head); sequence RPPFTYASLI…PPKMTGSPTL (91 aa). The residue at position 546 (Ser546) is a Phosphoserine. Residues 589 to 671 form a disordered region; sequence ASSLLPLSQE…LEEDLGGEDM (83 aa). The segment covering 609–627 has biased composition (polar residues); the sequence is SNGSSSPPRLSPPQYSHQI. Positions 628 to 642 are enriched in basic and acidic residues; it reads QVKEEPAEAEEDRRP.

As to quaternary structure, forms homodimers and heterodimers with FOXP1 and FOXP2. Dimerization is required for DNA-binding. In terms of tissue distribution, expressed in the adult heart, brain, spleen lung, liver, kidney and testes.

The protein localises to the nucleus. Its function is as follows. Transcriptional repressor that represses lung-specific expression. This is Forkhead box protein P4 from Mus musculus (Mouse).